The chain runs to 858 residues: Protein lines (858 aa).

The interval 1 to 102 (MDTSSAAGSG…NSPTTTPCSS (102 aa)) is disordered. 2 stretches are compositionally biased toward low complexity: residues 20–30 (STVATSTTSAS) and 65–102 (LDAN…PCSS).

The protein belongs to the protein lines family. As to quaternary structure, interacts with drm. As to expression, expressed throughout the embryo, including the hindgut, posterior midgut and embryonic epidermis.

It localises to the cytoplasm. The protein localises to the nucleus. Its function is as follows. Has a dual role as a segment polarity protein and as a modulator of the Abd-B protein. Required for Abd-B to activate the transcription of genes (including ems, cut and sal) that are involved in posterior spiracle morphogenesis. Also required for Abd-B to form an eighth abdominal denticle belt. Acts in a hierarchy downstream of drm and upstream of bowl during foregut and hindgut patterning and morphogenesis. Involved in cell rearrangement during elongation of the embryonic hindgut. Required to regulate expression of embryonic hindgut patterning genes in order to establish the large intestine and at least some rectum, and to repress small intestine fate. Required for late wingless (wg)-dependent cell fate specification in the dorsal embryonic epidermis. Acts in concert with wg to regulate expression of wg itself and also to regulate wg-target genes. May have a role in ventral epidermal patterning, independent of wg signaling. The chain is Protein lines from Drosophila melanogaster (Fruit fly).